A 172-amino-acid polypeptide reads, in one-letter code: Putative F-box protein At3g13825 (172 aa).

The F-box domain maps to 1–51 (MTTLSNLSVDLVGEIFSRVPLISLSEVRCTCTTWNTLSWNILSENYVFGKA).

This Arabidopsis thaliana (Mouse-ear cress) protein is Putative F-box protein At3g13825.